A 744-amino-acid polypeptide reads, in one-letter code: Endonuclease MutS2 (744 aa).

An ATP-binding site is contributed by 315 to 322 (GPNMGGKT). The 76-residue stretch at 668 to 743 (VDLRGLTVAE…GHGVTVVALR (76 aa)) folds into the Smr domain.

It belongs to the DNA mismatch repair MutS family. MutS2 subfamily. In terms of assembly, homodimer. Interacts with MutL. Binds to stalled ribosomes, contacting rRNA.

Nuclease activity is stimulated by interaction with MutL. ATPase activity is stimulated by dsDNA. In terms of biological role, endonuclease that is involved in the suppression of homologous recombination and may thus have a key role in the control of bacterial genetic diversity. Cleaves the phosphate backbone of oligodeoxynucleotides non-sequence-specifically at the 3' side of the phosphates. Preferably incises the branched DNA structures, especially the D-loop structure over the Holliday junction. Has ATPase activity. Binds to dsDNA but not to ssDNA. Functionally, acts as a ribosome collision sensor, splitting the ribosome into its 2 subunits. Detects stalled/collided 70S ribosomes which it binds and splits by an ATP-hydrolysis driven conformational change. Acts upstream of the ribosome quality control system (RQC), a ribosome-associated complex that mediates the extraction of incompletely synthesized nascent chains from stalled ribosomes and their subsequent degradation. Probably generates substrates for RQC. This is Endonuclease MutS2 from Thermus thermophilus (strain ATCC 27634 / DSM 579 / HB8).